The primary structure comprises 343 residues: DNA repair and recombination protein RadA (343 aa).

An ATP-binding site is contributed by 107–114 (GEFGAGKS).

It belongs to the eukaryotic RecA-like protein family.

Its function is as follows. Involved in DNA repair and in homologous recombination. Binds and assemble on single-stranded DNA to form a nucleoprotein filament. Hydrolyzes ATP in a ssDNA-dependent manner and promotes DNA strand exchange between homologous DNA molecules. This chain is DNA repair and recombination protein RadA, found in Haloquadratum walsbyi (strain DSM 16790 / HBSQ001).